The chain runs to 161 residues: Nucleotide-binding protein XAC3671 (161 aa).

It belongs to the YajQ family.

In terms of biological role, nucleotide-binding protein. The chain is Nucleotide-binding protein XAC3671 from Xanthomonas axonopodis pv. citri (strain 306).